Reading from the N-terminus, the 392-residue chain is Phosphoglycerate kinase (392 aa).

Substrate-binding positions include 21–23 (DFN), arginine 36, 59–62 (HLGR), arginine 118, and arginine 151. ATP-binding positions include lysine 202, glutamate 321, and 347–350 (GGDS).

It belongs to the phosphoglycerate kinase family. In terms of assembly, monomer.

The protein localises to the cytoplasm. The catalysed reaction is (2R)-3-phosphoglycerate + ATP = (2R)-3-phospho-glyceroyl phosphate + ADP. It participates in carbohydrate degradation; glycolysis; pyruvate from D-glyceraldehyde 3-phosphate: step 2/5. The polypeptide is Phosphoglycerate kinase (Symbiobacterium thermophilum (strain DSM 24528 / JCM 14929 / IAM 14863 / T)).